The sequence spans 151 residues: Transcriptional repressor NrdR (151 aa).

A zinc finger lies at 3–34; that stretch reads CPYCGYEETRVLDSRVDSSGMTVRRRRECVKC. The ATP-cone domain maps to 49–139; it reads VFVVKKDGKR…VYKDFREIDQ (91 aa).

Belongs to the NrdR family. Requires Zn(2+) as cofactor.

Its function is as follows. Negatively regulates transcription of bacterial ribonucleotide reductase nrd genes and operons by binding to NrdR-boxes. This chain is Transcriptional repressor NrdR, found in Thermosipho melanesiensis (strain DSM 12029 / CIP 104789 / BI429).